The sequence spans 279 residues: S-methyl-5'-thioadenosine phosphorylase (279 aa).

Residues Ser28, 70-71 (RH), and 103-104 (SA) each bind phosphate. Met202 serves as a coordination point for substrate. Position 203 (Thr203) interacts with phosphate. Position 226-228 (226-228 (DYD)) interacts with substrate.

It belongs to the PNP/MTAP phosphorylase family. MTAP subfamily. As to quaternary structure, homohexamer. Dimer of a homotrimer.

It carries out the reaction S-methyl-5'-thioadenosine + phosphate = 5-(methylsulfanyl)-alpha-D-ribose 1-phosphate + adenine. Its pathway is amino-acid biosynthesis; L-methionine biosynthesis via salvage pathway; S-methyl-5-thio-alpha-D-ribose 1-phosphate from S-methyl-5'-thioadenosine (phosphorylase route): step 1/1. In terms of biological role, catalyzes the reversible phosphorylation of S-methyl-5'-thioadenosine (MTA) to adenine and 5-methylthioribose-1-phosphate. Involved in the breakdown of MTA, a major by-product of polyamine biosynthesis. Responsible for the first step in the methionine salvage pathway after MTA has been generated from S-adenosylmethionine. Has broad substrate specificity with 6-aminopurine nucleosides as preferred substrates. The protein is S-methyl-5'-thioadenosine phosphorylase of Pyrobaculum aerophilum (strain ATCC 51768 / DSM 7523 / JCM 9630 / CIP 104966 / NBRC 100827 / IM2).